The following is a 447-amino-acid chain: Glutamyl-tRNA reductase (447 aa).

Substrate-binding positions include 45 to 48, S111, 116 to 118, and Q122; these read TCNR and ETE. C46 functions as the Nucleophile in the catalytic mechanism. NADP(+) is bound at residue 191–196; the sequence is GTGKYA.

The protein belongs to the glutamyl-tRNA reductase family. In terms of assembly, homodimer.

The catalysed reaction is (S)-4-amino-5-oxopentanoate + tRNA(Glu) + NADP(+) = L-glutamyl-tRNA(Glu) + NADPH + H(+). The protein operates within porphyrin-containing compound metabolism; protoporphyrin-IX biosynthesis; 5-aminolevulinate from L-glutamyl-tRNA(Glu): step 1/2. Its function is as follows. Catalyzes the NADPH-dependent reduction of glutamyl-tRNA(Glu) to glutamate 1-semialdehyde (GSA). This Tropheryma whipplei (strain Twist) (Whipple's bacillus) protein is Glutamyl-tRNA reductase.